The primary structure comprises 330 residues: Flotillin-like protein FloA (330 aa).

Transmembrane regions (helical) follow at residues 6–26 and 28–48; these read LFLLLIIAAGIILLAVFFTFV and VMLWISALAAGVKISIFTLIG.

Belongs to the flotillin-like FloA family. As to quaternary structure, homooligomerizes.

The protein resides in the cell membrane. It localises to the membrane raft. Found in functional membrane microdomains (FMM) that may be equivalent to eukaryotic membrane rafts. FMMs are highly dynamic and increase in number as cells age. Flotillins are thought to be important factors in membrane fluidity. The chain is Flotillin-like protein FloA from Bacillus licheniformis (strain ATCC 14580 / DSM 13 / JCM 2505 / CCUG 7422 / NBRC 12200 / NCIMB 9375 / NCTC 10341 / NRRL NRS-1264 / Gibson 46).